Here is a 158-residue protein sequence, read N- to C-terminus: SsrA-binding protein (158 aa).

Positions 131–158 (KQLHDKRQTEKERDWNKQKQRILQTNQR) are disordered. Residues 132-147 (QLHDKRQTEKERDWNK) are compositionally biased toward basic and acidic residues.

Belongs to the SmpB family.

It is found in the cytoplasm. Its function is as follows. Required for rescue of stalled ribosomes mediated by trans-translation. Binds to transfer-messenger RNA (tmRNA), required for stable association of tmRNA with ribosomes. tmRNA and SmpB together mimic tRNA shape, replacing the anticodon stem-loop with SmpB. tmRNA is encoded by the ssrA gene; the 2 termini fold to resemble tRNA(Ala) and it encodes a 'tag peptide', a short internal open reading frame. During trans-translation Ala-aminoacylated tmRNA acts like a tRNA, entering the A-site of stalled ribosomes, displacing the stalled mRNA. The ribosome then switches to translate the ORF on the tmRNA; the nascent peptide is terminated with the 'tag peptide' encoded by the tmRNA and targeted for degradation. The ribosome is freed to recommence translation, which seems to be the essential function of trans-translation. The protein is SsrA-binding protein of Teredinibacter turnerae (strain ATCC 39867 / T7901).